Reading from the N-terminus, the 908-residue chain is Disease resistance protein RPP8 (908 aa).

The stretch at 15-57 (DLLSRESERLQGIDGQLDGLKRQLRSLQSLLKDADAKKHGSDR) forms a coiled coil. Residues 146–459 (RQRVQREIRQ…AEGIYDGSTI (314 aa)) enclose the NB-ARC domain. Residue 192 to 199 (GMGGIGKT) participates in ATP binding. LRR repeat units lie at residues 575 to 600 (LTLL…IGGL), 601 to 623 (IHLR…MRNL), 648 to 673 (MIQL…DLVN), 693 to 718 (MTKL…SLRE), 722 to 746 (LETL…VLDH), 748 to 770 (IHLK…QFPP), 793 to 820 (LLHL…GFPQ), 842 to 867 (MPCL…KYIT), and 882 to 905 (KEKL…QFIN).

Belongs to the disease resistance NB-LRR family. RPP8/HRT subfamily. As to quaternary structure, interacts with the NAC protein TIP. Interacts with MORC1/CRT1. Interacts with COP1 and is subsequently degraded in a 26s proteasome dependent manner. In terms of tissue distribution, mostly expressed in leaves, and, to a lower extent, in roots.

The protein localises to the cell membrane. Disease resistance protein. Resistance proteins guard the plant against pathogens that contain an appropriate avirulence protein via an indirect interaction with this avirulence protein. That triggers a defense system including the hypersensitive response, which restricts the pathogen growth. The interaction with TIP (TCV-interacting protein) may be essential for the recognition of the avirulence proteins, and the triggering of the defense response. Triggers resistance to turnip crinkle virus (TCV) via a SAG101-dependent pathway. This chain is Disease resistance protein RPP8 (RPP8), found in Arabidopsis thaliana (Mouse-ear cress).